A 229-amino-acid polypeptide reads, in one-letter code: Flagellar L-ring protein (229 aa).

Residues 1–25 (MKQVRLPSSATVRAACAVAVAALAG) form the signal peptide. The N-palmitoyl cysteine moiety is linked to residue Cys-26. Cys-26 carries S-diacylglycerol cysteine lipidation.

Belongs to the FlgH family. As to quaternary structure, the basal body constitutes a major portion of the flagellar organelle and consists of four rings (L,P,S, and M) mounted on a central rod.

The protein resides in the cell outer membrane. The protein localises to the bacterial flagellum basal body. Assembles around the rod to form the L-ring and probably protects the motor/basal body from shearing forces during rotation. This is Flagellar L-ring protein from Burkholderia cenocepacia (strain ATCC BAA-245 / DSM 16553 / LMG 16656 / NCTC 13227 / J2315 / CF5610) (Burkholderia cepacia (strain J2315)).